The following is a 50-amino-acid chain: Small ribosomal subunit protein uS14 (50 aa).

4 residues coordinate Zn(2+): Cys15, Cys18, Cys33, and Cys36.

It belongs to the universal ribosomal protein uS14 family. Zinc-binding uS14 subfamily. Part of the 30S ribosomal subunit. It depends on Zn(2+) as a cofactor.

Functionally, binds 16S rRNA, required for the assembly of 30S particles. The sequence is that of Small ribosomal subunit protein uS14 from Methanosarcina barkeri (strain Fusaro / DSM 804).